Reading from the N-terminus, the 102-residue chain is Large ribosomal subunit protein uL24 (102 aa).

This sequence belongs to the universal ribosomal protein uL24 family. As to quaternary structure, part of the 50S ribosomal subunit.

One of two assembly initiator proteins, it binds directly to the 5'-end of the 23S rRNA, where it nucleates assembly of the 50S subunit. In terms of biological role, one of the proteins that surrounds the polypeptide exit tunnel on the outside of the subunit. This chain is Large ribosomal subunit protein uL24, found in Cupriavidus necator (strain ATCC 17699 / DSM 428 / KCTC 22496 / NCIMB 10442 / H16 / Stanier 337) (Ralstonia eutropha).